Here is a 394-residue protein sequence, read N- to C-terminus: Small ribosomal subunit protein mS79 (rPPR3b) (394 aa).

The transit peptide at 1 to 24 (MSSLSRFLLRGNFSFSTHTNRRFF) directs the protein to the mitochondrion. 8 PPR repeats span residues 105-139 (KEGF…NCKR), 140-170 (TALS…LPGK), 176-210 (DVAS…GLKP), 211-245 (DHIT…NVKR), 246-280 (DIRS…ELKP), 281-315 (DVFT…GCRP), 316-350 (LKFV…RLLV), and 351-385 (DEAV…DYLQ).

This sequence belongs to the PPR family. P subfamily. In terms of assembly, component of the mitochondrial ribosome small subunit.

The protein resides in the mitochondrion. The sequence is that of Small ribosomal subunit protein mS79 (rPPR3b) from Arabidopsis thaliana (Mouse-ear cress).